A 485-amino-acid chain; its full sequence is Bindin (485 aa).

An N-terminal signal peptide occupies residues 1-20 (MGFHQISVIIVVLALASARA). Residues 21 to 247 (ADEFPSHTDT…DSERGARKKR (227 aa)) constitute a propeptide that is removed on maturation. Disordered stretches follow at residues 157–195 (GETRKRRGADDNDGDDVSKRASPRKGDEPAGHKLKDLAP), 219–273 (ISGH…PAQQ), and 305–331 (GGGQFGAFSPGEAEADNADYDEYSDSL). Residues 172 to 192 (DVSKRASPRKGDEPAGHKLKD) show a composition bias toward basic and acidic residues. Over residues 250 to 264 (NQGNYPQAMNPQSRG) the composition is skewed to polar residues. Positions 317–331 (AEADNADYDEYSDSL) are enriched in acidic residues. The interval 371 to 379 (LRHLRHHSN) is fucose-binding domain. The disordered stretch occupies residues 459–485 (QQGMGGVPQRMGGQPQGNAYNQGYRQG). Over residues 465–475 (VPQRMGGQPQG) the composition is skewed to low complexity. The segment covering 476-485 (NAYNQGYRQG) has biased composition (polar residues).

The protein belongs to the bindin family.

Its subcellular location is the cytoplasmic vesicle. The protein resides in the secretory vesicle. It localises to the acrosome lumen. Species-specific sea urchin sperm protein required for adhesion of sperm to the egg surface during fertilization. Bindin coats the acrosomal process after it is externalized by the acrosome reaction. It binds to sulfated, fucose-containing polysaccharides on the vitelline layer receptor proteoglycans which cover the egg plasma membrane. The protein is Bindin of Mesocentrotus franciscanus (Giant red sea urchin).